The chain runs to 202 residues: ATP-dependent Clp protease proteolytic subunit (202 aa).

The active-site Nucleophile is the Ser101. Residue His126 is part of the active site.

This sequence belongs to the peptidase S14 family. As to quaternary structure, component of the chloroplastic Clp protease core complex.

Its subcellular location is the plastid. The protein localises to the chloroplast stroma. The enzyme catalyses Hydrolysis of proteins to small peptides in the presence of ATP and magnesium. alpha-casein is the usual test substrate. In the absence of ATP, only oligopeptides shorter than five residues are hydrolyzed (such as succinyl-Leu-Tyr-|-NHMec, and Leu-Tyr-Leu-|-Tyr-Trp, in which cleavage of the -Tyr-|-Leu- and -Tyr-|-Trp bonds also occurs).. Its function is as follows. Cleaves peptides in various proteins in a process that requires ATP hydrolysis. Has a chymotrypsin-like activity. Plays a major role in the degradation of misfolded proteins. The sequence is that of ATP-dependent Clp protease proteolytic subunit from Nuphar advena (Common spatterdock).